We begin with the raw amino-acid sequence, 107 residues long: uncharacterized protein (107 aa).

Positions 87 to 107 (KNRNGPKAEKRRPYVRAHAKW) are disordered.

This is an uncharacterized protein from Saccharomyces cerevisiae (strain ATCC 204508 / S288c) (Baker's yeast).